A 363-amino-acid polypeptide reads, in one-letter code: Probable auxin efflux carrier component 5a (363 aa).

The next 10 membrane-spanning stretches (helical) occupy residues 7–27 (VYKVVAATVPLYFALFLGYGS), 39–59 (CDAVNRLVAFFALPFFTFEFT), 72–92 (VAADVISKAVIVAVIGAWARF), 103–123 (SITSFSLSTLTNSLVVGVPMA), 134–154 (LVVQLSVFQAIVWLTLLLFVL), 222–242 (FVGITWACLANRLHIALPSAF), 246–266 (VLIMSKSGTGMAMFSMGLFMA), 281–301 (LGLVLKFALGPAAMAIGSIAV), 307–327 (VLRVAIIQAALPQSITSFIFA), and 342–362 (IFGMLVSLPLLVGFYIVLELI).

The protein belongs to the auxin efflux carrier (TC 2.A.69.1) family. In terms of tissue distribution, expressed in leaves, shoot apex and panicles. Expressed in roots, stem bases, stems, leaves and young panicles.

The protein resides in the membrane. May act as a component of the auxin efflux carrier. This is Probable auxin efflux carrier component 5a from Oryza sativa subsp. japonica (Rice).